The primary structure comprises 309 residues: uncharacterized protein (309 aa).

Disordered stretches follow at residues 1–94 (IGEV…RQQI) and 286–309 (HTRNSKFHPPAKNTPPPLEDPPRG). The span at 30-43 (PAQPPSPAPTPSRT) shows a compositional bias: pro residues. Positions 58–67 (RSKTPDKRSA) are enriched in basic and acidic residues. The segment covering 297–309 (KNTPPPLEDPPRG) has biased composition (pro residues).

This is an uncharacterized protein from Homo sapiens (Human).